Consider the following 182-residue polypeptide: Ribosome hibernation promotion factor (182 aa).

Belongs to the HPF/YfiA ribosome-associated protein family. Long HPF subfamily. Interacts with 100S ribosomes.

The protein resides in the cytoplasm. Required for dimerization of active 70S ribosomes into 100S ribosomes in stationary phase; 100S ribosomes are translationally inactive and sometimes present during exponential growth. The polypeptide is Ribosome hibernation promotion factor (Streptococcus pyogenes serotype M6 (strain ATCC BAA-946 / MGAS10394)).